A 60-amino-acid polypeptide reads, in one-letter code: MAKKGNRVQVILECTEHKTSGQPGTSRYITTKNKKNTPDRIELKKFNPILKKMTVHKEIK.

It belongs to the bacterial ribosomal protein bL33 family.

The protein is Large ribosomal subunit protein bL33 of Christiangramia forsetii (strain DSM 17595 / CGMCC 1.15422 / KT0803) (Gramella forsetii).